The sequence spans 424 residues: 3-isopropylmalate dehydratase large subunit 2 (424 aa).

[4Fe-4S] cluster is bound by residues C299, C359, and C362.

This sequence belongs to the aconitase/IPM isomerase family. LeuC type 2 subfamily. In terms of assembly, heterodimer of LeuC and LeuD. [4Fe-4S] cluster is required as a cofactor.

It catalyses the reaction (2R,3S)-3-isopropylmalate = (2S)-2-isopropylmalate. It functions in the pathway amino-acid biosynthesis; L-leucine biosynthesis; L-leucine from 3-methyl-2-oxobutanoate: step 2/4. Functionally, catalyzes the isomerization between 2-isopropylmalate and 3-isopropylmalate, via the formation of 2-isopropylmaleate. This chain is 3-isopropylmalate dehydratase large subunit 2, found in Rubrobacter xylanophilus (strain DSM 9941 / JCM 11954 / NBRC 16129 / PRD-1).